A 475-amino-acid polypeptide reads, in one-letter code: Glutamyl-tRNA(Gln) amidotransferase subunit A (475 aa).

Active-site charge relay system residues include K69 and S144. S168 (acyl-ester intermediate) is an active-site residue.

It belongs to the amidase family. GatA subfamily. In terms of assembly, heterotrimer of A, B and C subunits.

It catalyses the reaction L-glutamyl-tRNA(Gln) + L-glutamine + ATP + H2O = L-glutaminyl-tRNA(Gln) + L-glutamate + ADP + phosphate + H(+). Its function is as follows. Allows the formation of correctly charged Gln-tRNA(Gln) through the transamidation of misacylated Glu-tRNA(Gln) in organisms which lack glutaminyl-tRNA synthetase. The reaction takes place in the presence of glutamine and ATP through an activated gamma-phospho-Glu-tRNA(Gln). The protein is Glutamyl-tRNA(Gln) amidotransferase subunit A of Methanococcoides burtonii (strain DSM 6242 / NBRC 107633 / OCM 468 / ACE-M).